The following is a 230-amino-acid chain: Cell division ATP-binding protein FtsE (230 aa).

Residues 3 to 228 (ITLDHVTKQY…RDEQRGVYGM (226 aa)) form the ABC transporter domain. ATP is bound at residue 37 to 44 (GPSGSGKS).

It belongs to the ABC transporter superfamily. Homodimer. Forms a membrane-associated complex with FtsX.

The protein localises to the cell membrane. In terms of biological role, part of the ABC transporter FtsEX involved in cellular division. Has ATPase activity. The sequence is that of Cell division ATP-binding protein FtsE from Mycobacterium tuberculosis (strain ATCC 25618 / H37Rv).